The primary structure comprises 35 residues: Beta/omega-theraphotoxin-Bp1a (35 aa).

3 disulfide bridges follow: cysteine 2–cysteine 16, cysteine 9–cysteine 21, and cysteine 15–cysteine 28.

This sequence belongs to the neurotoxin 10 (Hwtx-1) family. 54 (ProTx-1) subfamily. In terms of processing, an unnatural amidation at Ser-35 provokes a 14-fold increased toxin ability to inhibit Nav1.2/SCN2A and a ~2-fold decreased toxin ability to inhibit both Nav1.5/SCN5A and Nav1.7/SCN9A. Expressed by the venom gland.

Its subcellular location is the secreted. Functionally, ion channel impairing toxin that inhibits voltage-gated calcium channel Cav3.1/CACNA1G (IC(50)=53 nM), voltage-gated potassium channels Kv2.1/KCNB1 (IC(50)=411 nM), all sodium channels tested (Nav1.2/SCN2A (IC(50)=60-104 nM), Nav1.5/SCN5A (IC(50)=76-358 nM), Nav1.6/SCN8A (IC(50)=21-133 nM), Nav1.7/SCN9A (IC(50)=51-95 nM), and Nav1.8/SCN10A) as well as the nociceptor cation channel TRPA1 (IC(50)=389 nM). Acts as a potent and selective blocker of voltage-gated calcium channel Cav3.1/CACNA1G, but not of Cav3.2/CACNA1H, and Cav3.3/CACNA1I. On Nav1.7/SCN9A, primarily interacts with the DII and DIV voltage-sensor domains. Also acts as an inhibitor of nociceptor cation channel TRPA1 (IC(50)~389 nM) by binding to the S1-S4 gating domain of TRPA1. It shows moderate affinity for lipid bilayers. The sequence is that of Beta/omega-theraphotoxin-Bp1a from Bumba pulcherrimaklaasi (Tarantula spider).